A 262-amino-acid polypeptide reads, in one-letter code: Acetaldehyde dehydrogenase 7 (262 aa).

An NAD(+)-binding site is contributed by 10–13; sequence SGNI. C128 (acyl-thioester intermediate) is an active-site residue. 159–167 serves as a coordination point for NAD(+); that stretch reads SAGPGTRAN.

This sequence belongs to the acetaldehyde dehydrogenase family.

The catalysed reaction is acetaldehyde + NAD(+) + CoA = acetyl-CoA + NADH + H(+). This is Acetaldehyde dehydrogenase 7 from Rhodococcus jostii (strain RHA1).